Consider the following 1299-residue polypeptide: DNA-directed RNA polymerase subunit beta' (1299 aa).

4 residues coordinate Zn(2+): Cys-60, Cys-62, Cys-75, and Cys-78. Positions 535, 537, and 539 each coordinate Mg(2+). Zn(2+)-binding residues include Cys-877, Cys-954, Cys-961, and Cys-964.

Belongs to the RNA polymerase beta' chain family. As to quaternary structure, the RNAP catalytic core consists of 2 alpha, 1 beta, 1 beta' and 1 omega subunit. When a sigma factor is associated with the core the holoenzyme is formed, which can initiate transcription. It depends on Mg(2+) as a cofactor. Zn(2+) serves as cofactor.

The catalysed reaction is RNA(n) + a ribonucleoside 5'-triphosphate = RNA(n+1) + diphosphate. Functionally, DNA-dependent RNA polymerase catalyzes the transcription of DNA into RNA using the four ribonucleoside triphosphates as substrates. This Renibacterium salmoninarum (strain ATCC 33209 / DSM 20767 / JCM 11484 / NBRC 15589 / NCIMB 2235) protein is DNA-directed RNA polymerase subunit beta'.